The chain runs to 200 residues: Probable nicotinate-nucleotide adenylyltransferase (200 aa).

It belongs to the NadD family.

It catalyses the reaction nicotinate beta-D-ribonucleotide + ATP + H(+) = deamido-NAD(+) + diphosphate. It functions in the pathway cofactor biosynthesis; NAD(+) biosynthesis; deamido-NAD(+) from nicotinate D-ribonucleotide: step 1/1. Catalyzes the reversible adenylation of nicotinate mononucleotide (NaMN) to nicotinic acid adenine dinucleotide (NaAD). The protein is Probable nicotinate-nucleotide adenylyltransferase of Clostridium novyi (strain NT).